Reading from the N-terminus, the 153-residue chain is Ribonuclease H (153 aa).

In terms of domain architecture, RNase H type-1 spans 1-142 (MLKTIKIFSD…CDHLARESAK (142 aa)). Mg(2+) is bound by residues Asp-10, Glu-48, Asp-70, and Asp-134.

The protein belongs to the RNase H family. Monomer. Mg(2+) is required as a cofactor.

The protein resides in the cytoplasm. The catalysed reaction is Endonucleolytic cleavage to 5'-phosphomonoester.. Functionally, endonuclease that specifically degrades the RNA of RNA-DNA hybrids. This Buchnera aphidicola subsp. Baizongia pistaciae (strain Bp) protein is Ribonuclease H.